We begin with the raw amino-acid sequence, 180 residues long: Large ribosomal subunit protein uL6 (180 aa).

The protein belongs to the universal ribosomal protein uL6 family. In terms of assembly, part of the 50S ribosomal subunit.

Its function is as follows. This protein binds to the 23S rRNA, and is important in its secondary structure. It is located near the subunit interface in the base of the L7/L12 stalk, and near the tRNA binding site of the peptidyltransferase center. The chain is Large ribosomal subunit protein uL6 from Clostridium botulinum (strain Loch Maree / Type A3).